The following is a 77-amino-acid chain: Putative defensin-like protein 118 (77 aa).

Residues Met1 to Gly25 form the signal peptide. Disulfide bonds link Cys29–Cys75, Cys39–Cys58, Cys44–Cys69, and Cys48–Cys71.

Belongs to the DEFL family.

It localises to the secreted. The protein is Putative defensin-like protein 118 (LCR52) of Arabidopsis thaliana (Mouse-ear cress).